A 538-amino-acid chain; its full sequence is Putative cysteine ligase BshC (538 aa).

Positions 460–485 (KINEQIELLERMLKRNIEKKHEVELN) form a coiled coil.

This sequence belongs to the BshC family.

In terms of biological role, involved in bacillithiol (BSH) biosynthesis. May catalyze the last step of the pathway, the addition of cysteine to glucosamine malate (GlcN-Mal) to generate BSH. This chain is Putative cysteine ligase BshC, found in Bacillus cereus (strain Q1).